We begin with the raw amino-acid sequence, 234 residues long: Ion-translocating oxidoreductase complex subunit E (234 aa).

5 helical membrane-spanning segments follow: residues Leu62–Phe82, Ile92–Ala112, Thr116–Gly136, Ile151–Leu171, and Ser205–Ile225.

This sequence belongs to the NqrDE/RnfAE family. As to quaternary structure, the complex is composed of six subunits: RnfA, RnfB, RnfC, RnfD, RnfE and RnfG.

Its subcellular location is the cell inner membrane. In terms of biological role, part of a membrane-bound complex that couples electron transfer with translocation of ions across the membrane. This is Ion-translocating oxidoreductase complex subunit E from Haemophilus influenzae (strain PittGG).